The primary structure comprises 157 residues: Transcription antitermination protein NusB (157 aa).

This sequence belongs to the NusB family.

Functionally, involved in transcription antitermination. Required for transcription of ribosomal RNA (rRNA) genes. Binds specifically to the boxA antiterminator sequence of the ribosomal RNA (rrn) operons. This is Transcription antitermination protein NusB from Xylella fastidiosa (strain 9a5c).